We begin with the raw amino-acid sequence, 296 residues long: Ribosomal RNA small subunit methyltransferase H (296 aa).

Residues 38–40 (GVH), E57, F88, D103, and H110 contribute to the S-adenosyl-L-methionine site.

This sequence belongs to the methyltransferase superfamily. RsmH family.

It is found in the cytoplasm. The enzyme catalyses cytidine(1402) in 16S rRNA + S-adenosyl-L-methionine = N(4)-methylcytidine(1402) in 16S rRNA + S-adenosyl-L-homocysteine + H(+). In terms of biological role, specifically methylates the N4 position of cytidine in position 1402 (C1402) of 16S rRNA. This is Ribosomal RNA small subunit methyltransferase H from Borreliella burgdorferi (strain ZS7) (Borrelia burgdorferi).